Reading from the N-terminus, the 71-residue chain is Small ribosomal subunit protein bS21 (71 aa).

The protein belongs to the bacterial ribosomal protein bS21 family.

This is Small ribosomal subunit protein bS21 from Shewanella piezotolerans (strain WP3 / JCM 13877).